Consider the following 792-residue polypeptide: Endonuclease MutS2 (792 aa).

344 to 351 (GPNTGGKT) is an ATP binding site. One can recognise a Smr domain in the interval 716–791 (IHLRGLHVEE…GLGVTVVYLE (76 aa)).

This sequence belongs to the DNA mismatch repair MutS family. MutS2 subfamily. In terms of assembly, homodimer. Binds to stalled ribosomes, contacting rRNA.

Endonuclease that is involved in the suppression of homologous recombination and thus may have a key role in the control of bacterial genetic diversity. In terms of biological role, acts as a ribosome collision sensor, splitting the ribosome into its 2 subunits. Detects stalled/collided 70S ribosomes which it binds and splits by an ATP-hydrolysis driven conformational change. Acts upstream of the ribosome quality control system (RQC), a ribosome-associated complex that mediates the extraction of incompletely synthesized nascent chains from stalled ribosomes and their subsequent degradation. Probably generates substrates for RQC. This Thermomicrobium roseum (strain ATCC 27502 / DSM 5159 / P-2) protein is Endonuclease MutS2.